An 80-amino-acid polypeptide reads, in one-letter code: Protein YibX (80 aa).

The sequence is that of Protein YibX from Escherichia coli (strain K12).